Reading from the N-terminus, the 366-residue chain is Aminomethyltransferase (366 aa).

This sequence belongs to the GcvT family. In terms of assembly, the glycine cleavage system is composed of four proteins: P, T, L and H.

The enzyme catalyses N(6)-[(R)-S(8)-aminomethyldihydrolipoyl]-L-lysyl-[protein] + (6S)-5,6,7,8-tetrahydrofolate = N(6)-[(R)-dihydrolipoyl]-L-lysyl-[protein] + (6R)-5,10-methylene-5,6,7,8-tetrahydrofolate + NH4(+). The glycine cleavage system catalyzes the degradation of glycine. In Bordetella avium (strain 197N), this protein is Aminomethyltransferase.